Here is a 366-residue protein sequence, read N- to C-terminus: Ribosomal RNA large subunit methyltransferase M (366 aa).

Residues S188, 221–224 (CPGG), D240, D260, and D277 contribute to the S-adenosyl-L-methionine site. K306 acts as the Proton acceptor in catalysis.

The protein belongs to the class I-like SAM-binding methyltransferase superfamily. RNA methyltransferase RlmE family. RlmM subfamily. Monomer.

It localises to the cytoplasm. It carries out the reaction cytidine(2498) in 23S rRNA + S-adenosyl-L-methionine = 2'-O-methylcytidine(2498) in 23S rRNA + S-adenosyl-L-homocysteine + H(+). Functionally, catalyzes the 2'-O-methylation at nucleotide C2498 in 23S rRNA. This is Ribosomal RNA large subunit methyltransferase M from Salmonella heidelberg (strain SL476).